The primary structure comprises 178 residues: Cytidylate kinase (178 aa).

Residue 7 to 15 (GLPGTGTTT) coordinates ATP.

This sequence belongs to the cytidylate kinase family. Type 2 subfamily.

It localises to the cytoplasm. It catalyses the reaction CMP + ATP = CDP + ADP. It carries out the reaction dCMP + ATP = dCDP + ADP. The polypeptide is Cytidylate kinase (Methanococcus maripaludis (strain C7 / ATCC BAA-1331)).